Consider the following 543-residue polypeptide: Telomerase Cajal body protein 1 homolog (543 aa).

The tract at residues 95-128 is disordered; that stretch reads GRPKNAVESPHAGVPMETSLAAEEEANGDEEEES. Acidic residues predominate over residues 116–127; the sequence is AEEEANGDEEEE. 3 WD repeats span residues 237-283, 291-329, and 378-421; these read PEGG…LRCS, DEVMAAISLAFSHDGEQIYAGYKRCIKIFDTSRPGRFCD, and GHKG…QPLV.

It belongs to the TCAB1 family.

It is found in the nucleus. Its subcellular location is the cajal body. In terms of biological role, RNA chaperone that plays a key role in Cajal body formation. Specifically recognizes and binds the Cajal body box (CAB box) present in both small Cajal body RNAs (scaRNAs). Probably acts by mediating localization of scaRNAs to Cajal bodies. The protein is Telomerase Cajal body protein 1 homolog of Drosophila melanogaster (Fruit fly).